A 247-amino-acid polypeptide reads, in one-letter code: Cytochrome c oxidase subunit 2 (247 aa).

Positions 1 to 11 (MFYLLNSIIMN) are cleaved as a signal peptide. Residues 12 to 38 (DVPTPYGMYFQDSATPNQEGILELHDN) lie on the Mitochondrial intermembrane side of the membrane. Residues 39–59 (IMFYLFIILGLVSWLLFTIVR) traverse the membrane as a helical segment. Residues 60-78 (TYSKNPIAYKYIKHGQTIE) are Mitochondrial matrix-facing. The helical transmembrane segment at 79 to 101 (IIWTIFPAVILLIIAFPSFILLY) threads the bilayer. Residues 102–247 (LCDEVISPAM…PAFLEWLNEQ (146 aa)) lie on the Mitochondrial intermembrane side of the membrane. Positions 182, 217, 219, 221, 225, and 228 each coordinate Cu cation. Glu219 contributes to the Mg(2+) binding site.

The protein belongs to the cytochrome c oxidase subunit 2 family. In terms of assembly, component of the cytochrome c oxidase (complex IV, CIV), a multisubunit enzyme composed of a catalytic core of 3 subunits and several supernumerary subunits. The complex exists as a monomer or a dimer and forms supercomplexes (SCs) in the inner mitochondrial membrane with ubiquinol-cytochrome c oxidoreductase (cytochrome b-c1 complex, complex III, CIII). Cu cation serves as cofactor. Post-translationally, the signal sequence of COX2 is processed by IMP1.

It is found in the mitochondrion inner membrane. It catalyses the reaction 4 Fe(II)-[cytochrome c] + O2 + 8 H(+)(in) = 4 Fe(III)-[cytochrome c] + 2 H2O + 4 H(+)(out). Its function is as follows. Component of the cytochrome c oxidase, the last enzyme in the mitochondrial electron transport chain which drives oxidative phosphorylation. The respiratory chain contains 3 multisubunit complexes succinate dehydrogenase (complex II, CII), ubiquinol-cytochrome c oxidoreductase (cytochrome b-c1 complex, complex III, CIII) and cytochrome c oxidase (complex IV, CIV), that cooperate to transfer electrons derived from NADH and succinate to molecular oxygen, creating an electrochemical gradient over the inner membrane that drives transmembrane transport and the ATP synthase. Cytochrome c oxidase is the component of the respiratory chain that catalyzes the reduction of oxygen to water. Electrons originating from reduced cytochrome c in the intermembrane space (IMS) are transferred via the dinuclear copper A center (CU(A)) of subunit 2 and heme A of subunit 1 to the active site in subunit 1, a binuclear center (BNC) formed by heme A3 and copper B (CU(B)). The BNC reduces molecular oxygen to 2 water molecules using 4 electrons from cytochrome c in the IMS and 4 protons from the mitochondrial matrix. The chain is Cytochrome c oxidase subunit 2 (COX2) from Kluyveromyces lactis (strain ATCC 8585 / CBS 2359 / DSM 70799 / NBRC 1267 / NRRL Y-1140 / WM37) (Yeast).